Reading from the N-terminus, the 191-residue chain is uncharacterized protein (191 aa).

Positions 1 to 23 (MKKTMSAITAAAAVTSCFTGFGA) are cleaved as a signal peptide.

This is an uncharacterized protein from Bacillus subtilis (strain 168).